The sequence spans 295 residues: 33 kDa chaperonin (295 aa).

2 cysteine pairs are disulfide-bonded: cysteine 236-cysteine 238 and cysteine 269-cysteine 272.

Belongs to the HSP33 family. Post-translationally, under oxidizing conditions two disulfide bonds are formed involving the reactive cysteines. Under reducing conditions zinc is bound to the reactive cysteines and the protein is inactive.

It localises to the cytoplasm. Functionally, redox regulated molecular chaperone. Protects both thermally unfolding and oxidatively damaged proteins from irreversible aggregation. Plays an important role in the bacterial defense system toward oxidative stress. This chain is 33 kDa chaperonin, found in Geobacter sp. (strain M21).